The following is a 188-amino-acid chain: ATP synthase subunit b (188 aa).

A helical membrane pass occupies residues 19 to 39; sequence VYVLGATIVSFLILFLFITYF.

Belongs to the ATPase B chain family. F-type ATPases have 2 components, F(1) - the catalytic core - and F(0) - the membrane proton channel. F(1) has five subunits: alpha(3), beta(3), gamma(1), delta(1), epsilon(1). F(0) has three main subunits: a(1), b(2) and c(10-14). The alpha and beta chains form an alternating ring which encloses part of the gamma chain. F(1) is attached to F(0) by a central stalk formed by the gamma and epsilon chains, while a peripheral stalk is formed by the delta and b chains.

Its subcellular location is the cell membrane. F(1)F(0) ATP synthase produces ATP from ADP in the presence of a proton or sodium gradient. F-type ATPases consist of two structural domains, F(1) containing the extramembraneous catalytic core and F(0) containing the membrane proton channel, linked together by a central stalk and a peripheral stalk. During catalysis, ATP synthesis in the catalytic domain of F(1) is coupled via a rotary mechanism of the central stalk subunits to proton translocation. Its function is as follows. Component of the F(0) channel, it forms part of the peripheral stalk, linking F(1) to F(0). This is ATP synthase subunit b from Mesomycoplasma hyopneumoniae (strain J / ATCC 25934 / NCTC 10110) (Mycoplasma hyopneumoniae).